A 465-amino-acid chain; its full sequence is Probable Xaa-Pro aminopeptidase pepP (465 aa).

Mn(2+)-binding residues include D261, D272, E395, and E435.

The protein belongs to the peptidase M24B family. Mn(2+) serves as cofactor.

It catalyses the reaction Release of any N-terminal amino acid, including proline, that is linked to proline, even from a dipeptide or tripeptide.. Its function is as follows. Catalyzes the removal of a penultimate prolyl residue from the N-termini of peptides. The protein is Probable Xaa-Pro aminopeptidase pepP (pepP) of Talaromyces marneffei (strain ATCC 18224 / CBS 334.59 / QM 7333) (Penicillium marneffei).